The chain runs to 267 residues: L-aspartate dehydrogenase (267 aa).

Positions 124 and 190 each coordinate NAD(+). The active site involves His-218.

Belongs to the L-aspartate dehydrogenase family.

The enzyme catalyses L-aspartate + NADP(+) + H2O = oxaloacetate + NH4(+) + NADPH + H(+). It carries out the reaction L-aspartate + NAD(+) + H2O = oxaloacetate + NH4(+) + NADH + H(+). It functions in the pathway cofactor biosynthesis; NAD(+) biosynthesis; iminoaspartate from L-aspartate (dehydrogenase route): step 1/1. Functionally, specifically catalyzes the NAD or NADP-dependent dehydrogenation of L-aspartate to iminoaspartate. This is L-aspartate dehydrogenase from Methanococcus maripaludis (strain C7 / ATCC BAA-1331).